A 648-amino-acid polypeptide reads, in one-letter code: Acetyl-coenzyme A synthetase (648 aa).

CoA contacts are provided by residues 191–194 (RGGR), threonine 310, and asparagine 334. ATP contacts are provided by residues 386 to 388 (GEP), 410 to 415 (DTWWQT), aspartate 499, and arginine 514. Serine 522 is a CoA binding site. An ATP-binding site is contributed by arginine 525. Residues valine 536, histidine 538, and isoleucine 541 each contribute to the Mg(2+) site. Residue arginine 583 participates in CoA binding. At lysine 608 the chain carries N6-acetyllysine.

The protein belongs to the ATP-dependent AMP-binding enzyme family. Mg(2+) is required as a cofactor. Post-translationally, acetylated. Deacetylation by the SIR2-homolog deacetylase activates the enzyme.

The enzyme catalyses acetate + ATP + CoA = acetyl-CoA + AMP + diphosphate. In terms of biological role, catalyzes the conversion of acetate into acetyl-CoA (AcCoA), an essential intermediate at the junction of anabolic and catabolic pathways. AcsA undergoes a two-step reaction. In the first half reaction, AcsA combines acetate with ATP to form acetyl-adenylate (AcAMP) intermediate. In the second half reaction, it can then transfer the acetyl group from AcAMP to the sulfhydryl group of CoA, forming the product AcCoA. This chain is Acetyl-coenzyme A synthetase, found in Aeromonas salmonicida (strain A449).